The chain runs to 831 residues: Replication restart protein PriA (831 aa).

Residues 304-471 (VLPLQGYHQV…HRHQNDPQRH (168 aa)) form the Helicase ATP-binding domain. 317–324 (GVTGSGKT) serves as a coordination point for ATP. Positions 413–416 (DEEH) match the DEAH box motif. Positions 537, 540, 546, 549, 568, 571, 581, and 584 each coordinate Zn(2+). In terms of domain architecture, Helicase C-terminal spans 575–735 (EIQPKVCPEC…ELPQREMLNY (161 aa)).

It belongs to the helicase family. PriA subfamily. In terms of assembly, component of the replication restart primosome. Zn(2+) serves as cofactor.

The catalysed reaction is Couples ATP hydrolysis with the unwinding of duplex DNA by translocating in the 3'-5' direction.. It carries out the reaction ATP + H2O = ADP + phosphate + H(+). Functionally, initiates the restart of stalled replication forks, which reloads the replicative helicase on sites other than the origin of replication. Recognizes and binds to abandoned replication forks and remodels them to uncover a helicase loading site. Promotes assembly of the primosome at these replication forks. The chain is Replication restart protein PriA from Synechocystis sp. (strain ATCC 27184 / PCC 6803 / Kazusa).